Consider the following 128-residue polypeptide: uncharacterized protein (128 aa).

The segment at 1–26 (MNSATSETTTNTGAAETTTSTGAAET) is disordered. A helical transmembrane segment spans residues 105–127 (IANGLLTNNGISVFISTVLLAIV).

This sequence belongs to the flocculin family.

It is found in the membrane. This is an uncharacterized protein from Saccharomyces cerevisiae (strain ATCC 204508 / S288c) (Baker's yeast).